A 338-amino-acid polypeptide reads, in one-letter code: Fructose-1,6-bisphosphatase class 1 (338 aa).

E91, D113, L115, and D116 together coordinate Mg(2+). Residues 116-119 (DGSS), N208, and K274 each bind substrate. A Mg(2+)-binding site is contributed by E280.

The protein belongs to the FBPase class 1 family. As to quaternary structure, homotetramer. Requires Mg(2+) as cofactor.

Its subcellular location is the cytoplasm. It carries out the reaction beta-D-fructose 1,6-bisphosphate + H2O = beta-D-fructose 6-phosphate + phosphate. It functions in the pathway carbohydrate biosynthesis; gluconeogenesis. The sequence is that of Fructose-1,6-bisphosphatase class 1 from Ralstonia nicotianae (strain ATCC BAA-1114 / GMI1000) (Ralstonia solanacearum).